The chain runs to 387 residues: Putative serine/threonine-protein kinase (387 aa).

Positions Tyr-15–Ile-344 constitute a Protein kinase domain. Residues Leu-21 to Tyr-29 and Lys-55 contribute to the ATP site. Asp-164 functions as the Proton acceptor in the catalytic mechanism. 2 helical membrane passes run Pro-232–Gly-252 and Ser-363–Phe-383.

Belongs to the protein kinase superfamily. Ser/Thr protein kinase family.

Its subcellular location is the cell membrane. It catalyses the reaction L-seryl-[protein] + ATP = O-phospho-L-seryl-[protein] + ADP + H(+). The catalysed reaction is L-threonyl-[protein] + ATP = O-phospho-L-threonyl-[protein] + ADP + H(+). In Mycoplasma genitalium (strain ATCC 33530 / DSM 19775 / NCTC 10195 / G37) (Mycoplasmoides genitalium), this protein is Putative serine/threonine-protein kinase.